The primary structure comprises 367 residues: Inositol-3-phosphate synthase (367 aa).

At serine 2 the chain carries N-acetylserine. Residue lysine 73 forms an Isoglutamyl lysine isopeptide (Lys-Gln) (interchain with Q-Cter in protein Pup) linkage. The NAD(+) site is built by aspartate 78, alanine 137, tyrosine 157, serine 200, aspartate 235, and lysine 248.

It belongs to the myo-inositol 1-phosphate synthase family. NAD(+) is required as a cofactor. Post-translationally, pupylated at Lys-73 by the prokaryotic ubiquitin-like protein Pup, which leads to its degradation by the proteasome.

It catalyses the reaction D-glucose 6-phosphate = 1D-myo-inositol 3-phosphate. Its function is as follows. Key enzyme in myo-inositol biosynthesis pathway that catalyzes the conversion of glucose 6-phosphate to 1D-myo-inositol 3-phosphate in a NAD-dependent manner. The chain is Inositol-3-phosphate synthase (ino1) from Mycobacterium tuberculosis (strain ATCC 25618 / H37Rv).